The chain runs to 150 residues: Ribosomal RNA large subunit methyltransferase H (150 aa).

S-adenosyl-L-methionine contacts are provided by residues leucine 71, glycine 100, and 118–123; that span reads FSQMTF.

This sequence belongs to the RNA methyltransferase RlmH family. As to quaternary structure, homodimer.

It is found in the cytoplasm. It carries out the reaction pseudouridine(1915) in 23S rRNA + S-adenosyl-L-methionine = N(3)-methylpseudouridine(1915) in 23S rRNA + S-adenosyl-L-homocysteine + H(+). Its function is as follows. Specifically methylates the pseudouridine at position 1915 (m3Psi1915) in 23S rRNA. This Mycoplasmopsis agalactiae (strain NCTC 10123 / CIP 59.7 / PG2) (Mycoplasma agalactiae) protein is Ribosomal RNA large subunit methyltransferase H.